The chain runs to 147 residues: Microsomal glutathione S-transferase 2 (147 aa).

Transmembrane regions (helical) follow at residues 6-26, 62-82, and 107-127; these read SLLAAVSLLSACQQSYFAWRV, VFIVMLWMAGWYFNQVFAACL, and GFRLSLGILTLLPVLAVLGVA.

Homotrimer.

It localises to the endoplasmic reticulum membrane. The protein localises to the microsome membrane. The enzyme catalyses RX + glutathione = an S-substituted glutathione + a halide anion + H(+). It catalyses the reaction 1-chloro-2,4-dinitrobenzene + glutathione = 2,4-dinitrophenyl-S-glutathione + chloride + H(+). The catalysed reaction is leukotriene C4 = leukotriene A4 + glutathione. It carries out the reaction (5S)-hydroperoxy-(6E,8Z,11Z,14Z)-eicosatetraenoate + 2 glutathione = (5S)-hydroxy-(6E,8Z,11Z,14Z)-eicosatetraenoate + glutathione disulfide + H2O. Each monomer binds on GSH molecule but only one subunit is catalytically active. Its function is as follows. Catalyzes several different glutathione-dependent reactions. Catalyzes the glutathione-dependent reduction of lipid hydroperoxides, such as 5-HPETE. Has glutathione transferase activity, toward xenobiotic electrophiles, such as 1-chloro-2, 4-dinitrobenzene (CDNB). Also catalyzes the conjugation of leukotriene A4 with reduced glutathione to form leukotriene C4 (LTC4). Involved in oxidative DNA damage induced by ER stress and anticancer agents by activating LTC4 biosynthetic machinery in nonimmune cells. In Mus musculus (Mouse), this protein is Microsomal glutathione S-transferase 2.